The following is a 490-amino-acid chain: Ketol-acid reductoisomerase (NADP(+)) (490 aa).

In terms of domain architecture, KARI N-terminal Rossmann spans 15-208 (INLQKCKLID…GSHHAGILHS (194 aa)). NADP(+) contacts are provided by residues 45-48 (CGSQ), R68, S78, and 108-110 (DKQ). H132 is an active-site residue. G158 serves as a coordination point for NADP(+). 2 KARI C-terminal knotted domains span residues 209-344 (SFIA…KCNI) and 345-484 (YYKQ…MTSM). 4 residues coordinate Mg(2+): D217, E221, E389, and E393. A substrate-binding site is contributed by S414.

It belongs to the ketol-acid reductoisomerase family. Mg(2+) is required as a cofactor.

The enzyme catalyses (2R)-2,3-dihydroxy-3-methylbutanoate + NADP(+) = (2S)-2-acetolactate + NADPH + H(+). The catalysed reaction is (2R,3R)-2,3-dihydroxy-3-methylpentanoate + NADP(+) = (S)-2-ethyl-2-hydroxy-3-oxobutanoate + NADPH + H(+). The protein operates within amino-acid biosynthesis; L-isoleucine biosynthesis; L-isoleucine from 2-oxobutanoate: step 2/4. It functions in the pathway amino-acid biosynthesis; L-valine biosynthesis; L-valine from pyruvate: step 2/4. Its function is as follows. Involved in the biosynthesis of branched-chain amino acids (BCAA). Catalyzes an alkyl-migration followed by a ketol-acid reduction of (S)-2-acetolactate (S2AL) to yield (R)-2,3-dihydroxy-isovalerate. In the isomerase reaction, S2AL is rearranged via a Mg-dependent methyl migration to produce 3-hydroxy-3-methyl-2-ketobutyrate (HMKB). In the reductase reaction, this 2-ketoacid undergoes a metal-dependent reduction by NADPH to yield (R)-2,3-dihydroxy-isovalerate. The protein is Ketol-acid reductoisomerase (NADP(+)) of Buchnera aphidicola subsp. Melaphis rhois.